Reading from the N-terminus, the 121-residue chain is Large ribosomal subunit protein bL12 (121 aa).

The protein belongs to the bacterial ribosomal protein bL12 family. In terms of assembly, homodimer. Part of the ribosomal stalk of the 50S ribosomal subunit. Forms a multimeric L10(L12)X complex, where L10 forms an elongated spine to which 2 to 4 L12 dimers bind in a sequential fashion. Binds GTP-bound translation factors.

Functionally, forms part of the ribosomal stalk which helps the ribosome interact with GTP-bound translation factors. Is thus essential for accurate translation. This Leuconostoc citreum (strain KM20) protein is Large ribosomal subunit protein bL12.